The primary structure comprises 661 residues: Solute carrier organic anion transporter family member 1A4 (661 aa).

Residues 1-20 (MGKSEKRVATHGVRCFAKIK) lie on the Cytoplasmic side of the membrane. A helical membrane pass occupies residues 21–40 (MFLLALTCAYVSKSLSGTYM). At 41–59 (NSMLTQIERQFGIPTSIVG) the chain is on the extracellular side. A helical membrane pass occupies residues 60-80 (LINGSFEIGNLLLIIFVSYFG). The Cytoplasmic segment spans residues 81-86 (TKLHRP). A helical transmembrane segment spans residues 87–111 (IMIGVGCAVMGLGCFLISLPHFLMG). Over 112 to 154 (QYEYETILPTSNVSSNSFFCVENRSQTLNPTQDPSECVKEMKS) the chain is Extracellular. 2 N-linked (GlcNAc...) asparagine glycosylation sites follow: Asn-123 and Asn-134. The helical transmembrane segment at 155-183 (LMWIYVLVGNIIRGIGETPIMPLGISYIE) threads the bilayer. Over 184–202 (DFAKSENSPLYIGILETGM) the chain is Cytoplasmic. Residues 203-223 (TIGPLIGLLLASSCANIYVDI) traverse the membrane as a helical segment. The Extracellular portion of the chain corresponds to 224–241 (ESVNTDDLTITPTDTRWV). The chain crosses the membrane as a helical span at residues 242-266 (GAWWIGFLVCAGVNILTSFPFFFFP). Over 267–310 (KTLPKEGLQENVDGTENAKEKKHRKKAKEEKRGITKDFFVFMKS) the chain is Cytoplasmic. The chain crosses the membrane as a helical span at residues 311 to 332 (LSCNPIYMLFILISVLQFNAFI). Over 333 to 352 (NSFTFMPKYLEQQYGKSTAE) the chain is Extracellular. Residues 353–376 (VVFLMGLYMLPPICLGYLIGGLIM) traverse the membrane as a helical segment. Topologically, residues 377–380 (KKFK) are cytoplasmic. Residues 381-404 (VTVKKAAHLAFWLCLSEYLLSFLS) traverse the membrane as a helical segment. At 405-512 (YVMTCDNFPV…PDCANKLQYF (108 aa)) the chain is on the extracellular side. Positions 432-487 (NKVLADCNTRCNCSTNTWDPVCGDNGLAYMSACLAGCEKSVGTGTNMVFQNCSCIQ) constitute a Kazal-like domain. Disulfide bonds link Cys-438–Cys-468, Cys-444–Cys-464, and Cys-453–Cys-485. Asn-443 carries N-linked (GlcNAc...) asparagine glycosylation. N-linked (GlcNAc...) asparagine glycosylation is found at Asn-482 and Asn-491. Residues 513 to 535 (LIIAIFGCFIYSLAGIPGYMVLL) traverse the membrane as a helical segment. The Cytoplasmic portion of the chain corresponds to 536–544 (RCIKSEEKS). Residues 545 to 570 (LGVGLHAFCIRILAGIPAPIYFGALI) form a helical membrane-spanning segment. Residues 571-604 (DRTCLHWGTLKCGEPGACRMYDINSFRRLYLGLP) are Extracellular-facing. A helical transmembrane segment spans residues 605 to 622 (AALRGASFVPAFFILRLT). Residues 623 to 661 (RTFQFPGDIESSKTDHAEMKLTLKESECTEVLRSKVTED) lie on the Cytoplasmic side of the membrane. Phosphoserine occurs at positions 633 and 634.

This sequence belongs to the organo anion transporter (TC 2.A.60) family. In terms of tissue distribution, highly expressed in brain, liver, and kidney but not expressed in heart, spleen, lung, skeletal muscle, and testis.

It localises to the cell membrane. The enzyme catalyses estrone 3-sulfate(out) = estrone 3-sulfate(in). It carries out the reaction taurocholate(out) = taurocholate(in). The catalysed reaction is prostaglandin E2(out) = prostaglandin E2(in). It catalyses the reaction L-thyroxine(out) = L-thyroxine(in). Functionally, mediates the Na(+)-independent transport of organic anions such as taurocholate, cholate, 17-beta-glucuronosyl estradiol, prostaglandin E2, estrone 3-sulfate, L-thyroxine (T4), the cardiac glycosides ouabain and digoxin and thyroid hormones. May play an especially important role in the brain accumulation and toxicity of digoxin and in the hepatobiliary and renal excretion of cardiac glycosides. Shows a pH-sensitive substrate specificity which may be ascribed to the protonation state of the binding site and leads to a stimulation of substrate transport in an acidic microenvironment. Hydrogencarbonate/HCO3(-) acts as the probable counteranion that exchanges for organic anions. This chain is Solute carrier organic anion transporter family member 1A4 (Slco1a4), found in Rattus norvegicus (Rat).